We begin with the raw amino-acid sequence, 381 residues long: uncharacterized protein (381 aa).

Belongs to the glycerate kinase type-1 family.

This is an uncharacterized protein from Mycobacterium tuberculosis (strain CDC 1551 / Oshkosh).